The primary structure comprises 705 residues: Choline transporter-like protein 2 (705 aa).

The Cytoplasmic portion of the chain corresponds to 1–31; it reads MEDQRKYGAYGTPQKYDPTFKGPIYNRGCTD. T12 carries the phosphothreonine modification. The helical transmembrane segment at 32–52 threads the bilayer; it reads VLCCVLLFLAIVGYVAVGLIA. Residues 53–231 lie on the Extracellular side of the membrane; sequence WTHGDPRKVI…RIFEDYTVSW (179 aa). Residues N186 and N199 are each glycosylated (N-linked (GlcNAc...) asparagine). Residues 232–252 form a helical membrane-spanning segment; sequence YWIVIGLVIAMVLSLLFIILL. Residues 253–255 are Cytoplasmic-facing; the sequence is RFL. The helical transmembrane segment at 256–276 threads the bilayer; that stretch reads AGIMVWVMIVLVILVLGYGIF. Over 277–314 the chain is Extracellular; the sequence is HCYMEYARLRGEAGSDISVLDLGFQTDFRVYLHLRQTW. The helical transmembrane segment at 315-335 threads the bilayer; it reads LAFMIILSILEVIIILLLIFL. Residues 336-363 lie on the Cytoplasmic side of the membrane; sequence RKRILIAIALIKEASRAVGYVMCSLLYP. A helical transmembrane segment spans residues 364 to 384; it reads LVTFFLLCLCIAYWASTAVFL. The Extracellular portion of the chain corresponds to 385-455; it reads STSNEAVYKI…IFNAFMFFWL (71 aa). N-linked (GlcNAc...) asparagine glycosylation occurs at N414. The chain crosses the membrane as a helical span at residues 456–478; that stretch reads ANFVLALGQVTLAGAFASYYWAL. Over 479–503 the chain is Cytoplasmic; that stretch reads RKPDDMPAFPLFAAFGRALRYHTGS. A helical transmembrane segment spans residues 504–524; that stretch reads LAFGSLILAIVQIIRVILEYL. Topologically, residues 525–562 are extracellular; sequence DQRLKAAENKFAKFLMTCLKCCFWCLEKFIKFLNRNAY. Residues 563 to 583 form a helical membrane-spanning segment; it reads IMIAIYGTNFCTSARNAFFLL. Over 584–598 the chain is Cytoplasmic; sequence MRNIIRVAVLDKVTD. Residues 599–619 traverse the membrane as a helical segment; sequence FLFLLGKLLIVGSVGILAFFF. The Extracellular segment spans residues 620–637; sequence FTHRIRIVQDTAPPLNYY. A helical membrane pass occupies residues 638 to 658; the sequence is WVPILTVIVGSYLIAHGFFSV. The Cytoplasmic portion of the chain corresponds to 659-705; it reads YGMCVDTLFLCFLEDLERNNGSSERPYFMSSTLKKLLNKTNKKPVES.

It belongs to the CTL (choline transporter-like) family. Interacts with COCH. In terms of processing, N-glycosylated; contains sialic acid. Not O-glycosylated. In terms of tissue distribution, expressed at high levels in lung, colon and in supporting cells of the inner ear (at protein level). Progressively lower levels in brain, tongue, liver and kidney (at protein level). In the tongue, strongly expressed in epithelial cells and in nerves within the musculature. Within the nerves, expression observed in the perineurial cells of the nerve sheath, in the Schwann cells and myelinated nerve fibers (at protein level). In the kidney, prominent expression in glomeruli in the lining of Bowman's capsule and on the mesangial cells adjacent to the vessels within the glomerulus (at protein level). Strongly expressed on the membranes of splenocytes (at protein level).

It localises to the cell membrane. The protein localises to the mitochondrion outer membrane. It carries out the reaction choline(out) + n H(+)(in) = choline(in) + n H(+)(out). The enzyme catalyses ethanolamine(out) + n H(+)(in) = ethanolamine(in) + n H(+)(out). Choline/H+ antiporter, mainly in mitochodria. Also acts as a low-affinity ethanolamine/H+ antiporter, regulating the supply of extracellular ethanolamine (Etn) for the CDP-Etn pathway, redistribute intracellular Etn and balance the CDP-Cho and CDP-Etn arms of the Kennedy pathway. In Cavia porcellus (Guinea pig), this protein is Choline transporter-like protein 2 (SLC44A2).